The following is an 82-amino-acid chain: Acyl carrier protein (82 aa).

Residues 4-79 (PEMEARLKQI…DALNYIEQKL (76 aa)) form the Carrier domain. An O-(pantetheine 4'-phosphoryl)serine modification is found at Ser39.

The protein belongs to the acyl carrier protein (ACP) family. In terms of processing, 4'-phosphopantetheine is transferred from CoA to a specific serine of apo-ACP by AcpS. This modification is essential for activity because fatty acids are bound in thioester linkage to the sulfhydryl of the prosthetic group.

It localises to the cytoplasm. It participates in lipid metabolism; fatty acid biosynthesis. In terms of biological role, carrier of the growing fatty acid chain in fatty acid biosynthesis. The sequence is that of Acyl carrier protein from Roseiflexus castenholzii (strain DSM 13941 / HLO8).